Reading from the N-terminus, the 462-residue chain is Syringate O-demethylase (462 aa).

This sequence belongs to the GcvT family.

It carries out the reaction syringate + (6S)-5,6,7,8-tetrahydrofolate = 3-O-methylgallate + (6S)-5-methyl-5,6,7,8-tetrahydrofolate. It participates in secondary metabolite metabolism; lignin degradation. In terms of biological role, involved in the catabolism of syringate. Catalyzes the conversion of syringate to 3-O-methylgallate (3MGA) in the presence of tetrahydrofolate. Has weak activity with vanillate and 3-O-methylgallate. The polypeptide is Syringate O-demethylase (Sphingobium sp. (strain NBRC 103272 / SYK-6)).